A 3907-amino-acid polypeptide reads, in one-letter code: Cyclo-acetoacetyl-L-tryptophan synthase (3907 aa).

The region spanning 2 to 436 is the Ketosynthase family 3 (KS3) domain; it reads KTPIAVVGTA…GTNAHAIIES (435 aa). Catalysis depends on for beta-ketoacyl synthase activity residues C176, H313, and H356. The segment at 555–870 is malonyl-CoA:ACP transacylase (MAT) domain; sequence IFTGQGAQWA…SLLRRGQNDL (316 aa). The N-terminal hotdog fold stretch occupies residues 937–1074; the sequence is HPLLGRRSAD…ARLTLHLGDA (138 aa). The dehydratase (DH) domain stretch occupies residues 937–1236; the sequence is HPLLGRRSAD…GLVMKSVPQP (300 aa). In terms of domain architecture, PKS/mFAS DH spans 937-1239; sequence HPLLGRRSAD…MKSVPQPDTS (303 aa). The segment at 1092 to 1239 is C-terminal hotdog fold; it reads LAPVDVADLY…MKSVPQPDTS (148 aa). A methyltransferase (MT) domain region spans residues 1386–1573; sequence AAMFSQLSKD…FSGIDHIFHD (188 aa). The segment at 2064–2238 is ketoreductase (KR)domain; it reads GTYFMIDMAT…VGSVMALGMV (175 aa). Residues 2324–2352 are disordered; it reads TKEGQYAEQEDSPSLLVPDEQLQESGPGR. The Carrier 1 domain occupies 2356–2430; that stretch reads DDLLARLSGK…LCEKAVPKPN (75 aa). S2390 carries the post-translational modification O-(pantetheine 4'-phosphoryl)serine. Residues 2504-2926 are condensation; that stretch reads MSPHQSQIWF…SSNPLISVQS (423 aa). The interval 2959-3359 is adenylation; it reads FQDMVDQYGD…GSLILLGRMD (401 aa). In terms of domain architecture, Carrier 2 spans 3474–3549; the sequence is KRLTLGEGEL…QMALKVDARK (76 aa). O-(pantetheine 4'-phosphoryl)serine is present on S3509. The reductase (RED) domain stretch occupies residues 3594 to 3813; sequence LTGSTSFLGR…DFQKVEIIAE (220 aa).

It in the C-terminal section; belongs to the NRP synthetase family.

The catalysed reaction is L-tryptophan + malonyl-CoA + acetyl-CoA = cyclo-acetoacetyl-L-tryptophan + CO2 + 2 CoA + H2O. The protein operates within secondary metabolite biosynthesis. Hybrid PKS-NRPS synthetase; part of the gene cluster that mediates the biosynthesis of the fungal neurotoxin cyclopiazonic acid (CPA), a nanomolar inhibitor of Ca(2+)-ATPase with a unique pentacyclic indole tetramic acid scaffold. The hybrid two module polyketide synthase-nonribosomal peptide synthetase (PKS-NRPS) cpaS incorporates acetyl-CoA, malonyl-CoA, and tryptophan (Trp) and utilizes a C-terminal redox-incompetent reductase domain to make and release the tryptophan tetramic acid, cyclo-acetoacetyl-L-tryptophan (c-AATrp), as the first intermediate in the pathway. CpaS catalyzes a Dieckmann-type cyclization on the N-acetoacetyl-Trp intermediate bound in thioester linkage to the phosphopantetheinyl arm of the T domain to form and release c-AATrp. CpaD then regiospecifically dimethylallylates c-AATrp to form beta-cyclopiazonic acid. CpaD discriminates against free Trp but accepts tryptophan-containing thiohydantoins, diketopiperazines, and linear peptides as substrates for C4-prenylation and also acts as regiospecific O-dimethylallyltransferase (DMAT) on a tyrosine-derived tetramic acid. The beta-cyclopiazonate dehydrogenase cpaO then carries out the dehydrogenation of beta-CPA to yield an unstable enimine product, which is captured by intramolecular cyclization to create the pentacyclic fused scaffold of alpha-cyclopiazonate. Finally, the cytochrome P450 monooxygenase cpaH mediates the conversion of CPA into the less toxic 2-oxocyclopiazonic acid, the end product of the CPA pathway in A.oryza. The protein is Cyclo-acetoacetyl-L-tryptophan synthase of Aspergillus oryzae (Yellow koji mold).